The chain runs to 179 residues: uncharacterized protein (179 aa).

This is an uncharacterized protein from Encephalitozoon cuniculi (strain GB-M1) (Microsporidian parasite).